Here is a 564-residue protein sequence, read N- to C-terminus: Dihydroxy-acid dehydratase (564 aa).

C51 contacts [2Fe-2S] cluster. D83 provides a ligand contact to Mg(2+). C124 contacts [2Fe-2S] cluster. 2 residues coordinate Mg(2+): D125 and K126. K126 is modified (N6-carboxylysine). C196 is a binding site for [2Fe-2S] cluster. Residue E448 participates in Mg(2+) binding. S474 (proton acceptor) is an active-site residue.

This sequence belongs to the IlvD/Edd family. In terms of assembly, homodimer. It depends on [2Fe-2S] cluster as a cofactor. Mg(2+) serves as cofactor.

The enzyme catalyses (2R)-2,3-dihydroxy-3-methylbutanoate = 3-methyl-2-oxobutanoate + H2O. It carries out the reaction (2R,3R)-2,3-dihydroxy-3-methylpentanoate = (S)-3-methyl-2-oxopentanoate + H2O. It participates in amino-acid biosynthesis; L-isoleucine biosynthesis; L-isoleucine from 2-oxobutanoate: step 3/4. Its pathway is amino-acid biosynthesis; L-valine biosynthesis; L-valine from pyruvate: step 3/4. Its function is as follows. Functions in the biosynthesis of branched-chain amino acids. Catalyzes the dehydration of (2R,3R)-2,3-dihydroxy-3-methylpentanoate (2,3-dihydroxy-3-methylvalerate) into 2-oxo-3-methylpentanoate (2-oxo-3-methylvalerate) and of (2R)-2,3-dihydroxy-3-methylbutanoate (2,3-dihydroxyisovalerate) into 2-oxo-3-methylbutanoate (2-oxoisovalerate), the penultimate precursor to L-isoleucine and L-valine, respectively. The polypeptide is Dihydroxy-acid dehydratase (Polynucleobacter asymbioticus (strain DSM 18221 / CIP 109841 / QLW-P1DMWA-1) (Polynucleobacter necessarius subsp. asymbioticus)).